Reading from the N-terminus, the 485-residue chain is UDP-N-acetylmuramate--L-alanine ligase (485 aa).

120 to 126 (GSHGKTT) contacts ATP.

This sequence belongs to the MurCDEF family.

Its subcellular location is the cytoplasm. It catalyses the reaction UDP-N-acetyl-alpha-D-muramate + L-alanine + ATP = UDP-N-acetyl-alpha-D-muramoyl-L-alanine + ADP + phosphate + H(+). Its pathway is cell wall biogenesis; peptidoglycan biosynthesis. In terms of biological role, cell wall formation. The polypeptide is UDP-N-acetylmuramate--L-alanine ligase (Rickettsia peacockii (strain Rustic)).